A 186-amino-acid chain; its full sequence is MGVREQLERVAAYFGFGVDDDYYEDEEEEERYAKGSYGNGGRTGEPSPAVRRLGRSERSSAFGTSLGDLFGSEGPERGRYAHNPPHLRAVPDQRPTRVSVVEPSSFNDAQALADRFKRQQPVILNLQNVNSDLSRRMVDFCAGLTYALDGHIQTVANRVFLLTPRDVEVSAEERKMLAERAFFNQL.

Positions 24–91 (EDEEEEERYA…HNPPHLRAVP (68 aa)) are disordered.

Belongs to the SepF family. Homodimer. Interacts with FtsZ.

The protein localises to the cytoplasm. In terms of biological role, cell division protein that is part of the divisome complex and is recruited early to the Z-ring. Probably stimulates Z-ring formation, perhaps through the cross-linking of FtsZ protofilaments. Its function overlaps with FtsA. The chain is Cell division protein SepF from Rubrobacter xylanophilus (strain DSM 9941 / JCM 11954 / NBRC 16129 / PRD-1).